The sequence spans 821 residues: Bifunctional dethiobiotin synthetase/7,8-diamino-pelargonic acid aminotransferase, mitochondrial (821 aa).

The tract at residues 28-283 is dethiobiotin synthetase; it reads SPAFAVFGAN…VHVLPPIPED (256 aa). 39-44 is an ATP binding site; sequence GVGKTL. Thr-43 provides a ligand contact to Mg(2+). Thr-72 provides a ligand contact to substrate. Mg(2+) is bound at residue Glu-194. 194 to 197 provides a ligand contact to ATP; sequence ETAG. The segment at 316–820 is 7,8-diamino-pelargonic acid aminotransferase; that stretch reads RLNSMQRKSK…AKVHRRLQKL (505 aa). Residue 374-375 coordinates (8S)-8-amino-7-oxononanoate; that stretch reads WW. A pyridoxal 5'-phosphate-binding site is contributed by 436–437; that stretch reads GS. A (8S)-8-amino-7-oxononanoate-binding site is contributed by Tyr-482. Pyridoxal 5'-phosphate is bound at residue Asp-626. (8S)-8-amino-7-oxononanoate-binding residues include Lys-655 and Gly-689. N6-(pyridoxal phosphate)lysine is present on Lys-655. Position 691 (Ser-691) interacts with pyridoxal 5'-phosphate. A (8S)-8-amino-7-oxononanoate-binding site is contributed by Arg-787.

The protein in the N-terminal section; belongs to the dethiobiotin synthetase family. It in the C-terminal section; belongs to the class-III pyridoxal-phosphate-dependent aminotransferase family. BioA subfamily. Mg(2+) serves as cofactor. Pyridoxal 5'-phosphate is required as a cofactor.

The protein localises to the mitochondrion. The enzyme catalyses (7R,8S)-7,8-diammoniononanoate + CO2 + ATP = (4R,5S)-dethiobiotin + ADP + phosphate + 3 H(+). The catalysed reaction is (8S)-8-amino-7-oxononanoate + S-adenosyl-L-methionine = S-adenosyl-4-methylsulfanyl-2-oxobutanoate + (7R,8S)-7,8-diammoniononanoate. Its pathway is cofactor biosynthesis; biotin biosynthesis; biotin from 7,8-diaminononanoate: step 1/2. It functions in the pathway cofactor biosynthesis; biotin biosynthesis; 7,8-diaminononanoate from 8-amino-7-oxononanoate (SAM route): step 1/1. Bifunctional enzyme that catalyzes two different reactions involved in the biotin biosynthesis. Its function is as follows. Catalyzes a mechanistically unusual reaction, the ATP-dependent insertion of CO2 between the N7 and N8 nitrogen atoms of 7,8-diaminopelargonic acid (DAPA) to form an ureido ring. Functionally, catalyzes the transfer of the alpha-amino group from S-adenosyl-L-methionine (SAM) to 7-keto-8-aminopelargonic acid (KAPA) to form 7,8-diaminopelargonic acid (DAPA). It is the only aminotransferase known to utilize SAM as an amino donor. The sequence is that of Bifunctional dethiobiotin synthetase/7,8-diamino-pelargonic acid aminotransferase, mitochondrial (BIO3-BIO1) from Oryza sativa subsp. japonica (Rice).